The primary structure comprises 132 residues: Ribosome-binding factor A (132 aa).

This sequence belongs to the RbfA family. As to quaternary structure, monomer. Binds 30S ribosomal subunits, but not 50S ribosomal subunits or 70S ribosomes.

The protein localises to the cytoplasm. Its function is as follows. One of several proteins that assist in the late maturation steps of the functional core of the 30S ribosomal subunit. Associates with free 30S ribosomal subunits (but not with 30S subunits that are part of 70S ribosomes or polysomes). Required for efficient processing of 16S rRNA. May interact with the 5'-terminal helix region of 16S rRNA. This Burkholderia multivorans (strain ATCC 17616 / 249) protein is Ribosome-binding factor A.